We begin with the raw amino-acid sequence, 299 residues long: tRNA pseudouridine synthase B (299 aa).

The Nucleophile role is filled by Asp-45.

Belongs to the pseudouridine synthase TruB family. Type 1 subfamily.

The catalysed reaction is uridine(55) in tRNA = pseudouridine(55) in tRNA. Responsible for synthesis of pseudouridine from uracil-55 in the psi GC loop of transfer RNAs. The chain is tRNA pseudouridine synthase B from Streptomyces griseus subsp. griseus (strain JCM 4626 / CBS 651.72 / NBRC 13350 / KCC S-0626 / ISP 5235).